Reading from the N-terminus, the 641-residue chain is Chaperone protein DnaK (641 aa).

At threonine 200 the chain carries Phosphothreonine; by autocatalysis. Low complexity predominate over residues 602-611 (AASSKASAAS). The segment at 602–641 (AASSKASAASSPPPPPGAGGQKSDVIDAEFEKVDKDKPQA) is disordered. A compositionally biased stretch (basic and acidic residues) spans 630 to 641 (EFEKVDKDKPQA).

This sequence belongs to the heat shock protein 70 family.

Its function is as follows. Acts as a chaperone. This Methylacidiphilum infernorum (isolate V4) (Methylokorus infernorum (strain V4)) protein is Chaperone protein DnaK.